Consider the following 319-residue polypeptide: 1-aminocyclopropane-1-carboxylate oxidase (319 aa).

One can recognise a Fe2OG dioxygenase domain in the interval P153 to P253. 3 residues coordinate Fe cation: H177, D179, and H234.

It belongs to the iron/ascorbate-dependent oxidoreductase family. Fe cation serves as cofactor.

The enzyme catalyses 1-aminocyclopropane-1-carboxylate + L-ascorbate + O2 = ethene + L-dehydroascorbate + hydrogen cyanide + CO2 + 2 H2O. Its pathway is alkene biosynthesis; ethylene biosynthesis via S-adenosyl-L-methionine; ethylene from S-adenosyl-L-methionine: step 2/2. This chain is 1-aminocyclopropane-1-carboxylate oxidase (ACO1), found in Prunus mume (Japanese apricot).